Here is a 471-residue protein sequence, read N- to C-terminus: Arginine biosynthesis bifunctional protein ArgJ, mitochondrial (471 aa).

The N-terminal 33 residues, 1–33, are a transit peptide targeting the mitochondrion; that stretch reads MAMAGCNGFFLHQLRQPRLQLARQLGRTPSRAY. The substrate site is built by T201, K230, T241, E327, N466, and T471. T241 functions as the Nucleophile in the catalytic mechanism.

The protein belongs to the ArgJ family. Heterodimer of an alpha and a beta chain. The alpha and beta chains are autoproteolytically processed from a single precursor protein within the mitochondrion.

Its subcellular location is the mitochondrion matrix. The enzyme catalyses N(2)-acetyl-L-ornithine + L-glutamate = N-acetyl-L-glutamate + L-ornithine. It carries out the reaction L-glutamate + acetyl-CoA = N-acetyl-L-glutamate + CoA + H(+). Its pathway is amino-acid biosynthesis; L-arginine biosynthesis; L-ornithine and N-acetyl-L-glutamate from L-glutamate and N(2)-acetyl-L-ornithine (cyclic): step 1/1. It functions in the pathway amino-acid biosynthesis; L-arginine biosynthesis; N(2)-acetyl-L-ornithine from L-glutamate: step 1/4. In terms of biological role, catalyzes two activities which are involved in the cyclic version of arginine biosynthesis: the synthesis of acetylglutamate from glutamate and acetyl-CoA, and of ornithine by transacetylation between acetylornithine and glutamate. The protein is Arginine biosynthesis bifunctional protein ArgJ, mitochondrial of Chaetomium globosum (strain ATCC 6205 / CBS 148.51 / DSM 1962 / NBRC 6347 / NRRL 1970) (Soil fungus).